We begin with the raw amino-acid sequence, 328 residues long: MANSDSPEQNENHCSAINSSIPLTPGSLPTLTLSGKIRVTVTFFLFLLSTIFNTSFLLKLQNWTQRKEKRKKLSRMKLLLKHLTLANLLETLIVMPLDGMWNITVQWYAGELLCKVLSYLKLFSMYAPAFMMVVISLDRSLAITKPLAVKSNSKLGQFMIGLAWLLSSIFAGPQLYIFGMIHLADDSGQTEGFSQCVTHCSFPQWWHQAFYNFFTFSCLFIIPLLIMVICNAKIIFTLTRVLHQDPHKLQLNQSKNNIPRARLRTLKMTVAFATSFTVCWTPYYVLGIWYWFDPDMVNRVSDPVNHFFFLFAFLNPCFDPLIYGYFSL.

The Extracellular segment spans residues 1–38 (MANSDSPEQNENHCSAINSSIPLTPGSLPTLTLSGKIR). The N-linked (GlcNAc...) asparagine glycan is linked to N18. Residues 39–58 (VTVTFFLFLLSTIFNTSFLL) traverse the membrane as a helical segment. Over 59–77 (KLQNWTQRKEKRKKLSRMK) the chain is Cytoplasmic. Residues 78–97 (LLLKHLTLANLLETLIVMPL) traverse the membrane as a helical segment. The Extracellular segment spans residues 98–115 (DGMWNITVQWYAGELLCK). N102 is a glycosylation site (N-linked (GlcNAc...) asparagine). C114 and C196 form a disulfide bridge. A helical membrane pass occupies residues 116–137 (VLSYLKLFSMYAPAFMMVVISL). The Cytoplasmic segment spans residues 138–164 (DRSLAITKPLAVKSNSKLGQFMIGLAW). A helical membrane pass occupies residues 165–184 (LLSSIFAGPQLYIFGMIHLA). Topologically, residues 185 to 212 (DDSGQTEGFSQCVTHCSFPQWWHQAFYN) are extracellular. A helical transmembrane segment spans residues 213 to 232 (FFTFSCLFIIPLLIMVICNA). Over 233-281 (KIIFTLTRVLHQDPHKLQLNQSKNNIPRARLRTLKMTVAFATSFTVCWT) the chain is Cytoplasmic. Residues 282–300 (PYYVLGIWYWFDPDMVNRV) form a helical membrane-spanning segment. Residues 301–306 (SDPVNH) are Extracellular-facing. A helical transmembrane segment spans residues 307 to 326 (FFFLFAFLNPCFDPLIYGYF). Residues 327–328 (SL) lie on the Cytoplasmic side of the membrane.

Belongs to the G-protein coupled receptor 1 family.

It is found in the cell membrane. Functionally, receptor for gonadotropin releasing hormone (GnRH) that mediates the action of GnRH to stimulate the secretion of the gonadotropic hormones luteinizing hormone (LH) and follicle-stimulating hormone (FSH). This receptor mediates its action by association with G-proteins that activate a phosphatidylinositol-calcium second messenger system. The polypeptide is Gonadotropin-releasing hormone receptor (GNRHR) (Bos taurus (Bovine)).